Reading from the N-terminus, the 70-residue chain is Alpha-conotoxin EIIB (70 aa).

The N-terminal stretch at 1–21 (MGMRMMFIVFLLVVLATTVVS) is a signal peptide. Positions 22–51 (FTLDHVLGLASEGRNAKAIDNALDQRDPKR) are excised as a propeptide. Glutamine 52 bears the Pyrrolidone carboxylic acid mark. Hydroxyproline is present on proline 54. Disulfide bonds link cysteine 56/cysteine 62 and cysteine 57/cysteine 67. A Cysteine amide modification is found at cysteine 67.

Expressed by the venom duct.

Its subcellular location is the secreted. In terms of biological role, alpha-conotoxins bind to the nicotinic acetylcholine receptors (nAChR) and inhibit them. This peptide potently blocks muscular nicotinic acetylcholine receptor (CHRNA1-CHRNB1-CHRNG-CHRND), and has no effect on neuronal receptors. It is able to totally displace [125I]-Bgtx from the Torpedo receptor with an inhibition constant (Ki) of 2.2 and 0.7 nM. This is Alpha-conotoxin EIIB from Conus ermineus (Agate cone).